We begin with the raw amino-acid sequence, 331 residues long: PIN2/TERF1-interacting telomerase inhibitor 1 (331 aa).

3 disordered regions span residues 1 to 28 (MSML…DDSK), 156 to 175 (AQDG…LTTT), and 197 to 331 (SKSQ…KVSR). The G-patch domain occupies 26-72 (DSKFGQKMLEKMGWSKGKGLGAQEQGATEHIKVKVKNNHLGLGATNN). Residue Ser-233 is modified to Phosphoserine. Residues 236–246 (HKAKRHKKKKR) show a composition bias toward basic residues. Residues 247–261 (VEAERGPAAKKRDQV) are compositionally biased toward basic and acidic residues. The interval 254–328 (AAKKRDQVEL…DSAPVKKKKK (75 aa)) is telomerase inhibitory domain (TID). Residues Ser-269, Ser-274, and Ser-277 each carry the phosphoserine modification. The short motif at 291–301 (QDDVPKPRKRR) is the TBM element. Residues 297–306 (PRKRRAKKTL) show a composition bias toward basic residues.

This sequence belongs to the PINX1 family. Interacts with MCRS1, TERT, TERF1, NCL/nucleolin, and the telomerase RNA.

The protein resides in the nucleus. Its subcellular location is the nucleolus. The protein localises to the chromosome. It is found in the telomere. It localises to the centromere. The protein resides in the kinetochore. Its function is as follows. Microtubule-binding protein essential for faithful chromosome segregation. Mediates TRF1 and TERT accumulation in nucleolus and enhances TRF1 binding to telomeres. Inhibits telomerase activity. May inhibit cell proliferation and act as tumor suppressor. This Rattus norvegicus (Rat) protein is PIN2/TERF1-interacting telomerase inhibitor 1.